We begin with the raw amino-acid sequence, 206 residues long: MSPTQEQLIALGGVFQAAVLVDRIAKTGQISEAALSCMLGSLLVVDPKDTLDVYGGDDLNLHEGYRAMASALERDPATLQREPLRYALSMLGLERQLAKRDDLLEVIGKRIPVIQSQVEHFGIAHENVIAATGALYQDTLSTLRQRIQVQGDMRNLQQPNNASKIRGILLAGIRSARLWRQVGGHRWQLVFSRRKLLKELYPLLHG.

Belongs to the HflD family.

It localises to the cytoplasm. Its subcellular location is the cell inner membrane. This is High frequency lysogenization protein HflD homolog from Pseudomonas syringae pv. syringae (strain B728a).